The chain runs to 183 residues: RSCEICHNVGNDCDYDYVQECDSPEDQCGTVMLEGSLAPFSVRTIHRNCFSSSLCKLEHFDVNTGNGAYLRGRIHCCDQQKCEGRPFPGLPLSYPNGYVCPGVLRGLFSDSSESEAACKGDETKCITIVGYRKERFLGDIAYNIKGCVSSCPELILSNRTHEERRNELIKVECRDAAKTTPSE.

Disulfide bonds link C3-C28, C6-C13, C21-C49, C55-C76, C77-C82, C100-C125, C118-C147, and C151-C173. N-linked (GlcNAc...) asparagine glycosylation occurs at N158.

This sequence belongs to the CNF-like-inhibitor family. As to quaternary structure, heterodimer of subunit A and subunit B. As to expression, expressed by the liver.

The protein resides in the secreted. Its function is as follows. Phospholipase A2 (PA2) inhibitor. Inhibits the enzymatic activity of PA2 of Deinagkistrodon acutus. Also shows a wide anti-hemorrhage activities to D.acutus, Naja atra and Agkistrodon halys venom. The native protein is more potent than the recombinant one. This chain is Phospholipase A2 inhibitor gamma subunit A1, found in Trimerodytes annularis (Red-bellied annulate keelback).